Consider the following 353-residue polypeptide: sn-glycerol-3-phosphate import ATP-binding protein UgpC 3 (353 aa).

Residues 4–235 (IALKDVRKVY…PATTFVATFI (232 aa)) form the ABC transporter domain. Residue 37-44 (GPSGCGKS) coordinates ATP.

The protein belongs to the ABC transporter superfamily. sn-glycerol-3-phosphate importer (TC 3.A.1.1.3) family. The complex is composed of two ATP-binding proteins (UgpC), two transmembrane proteins (UgpA and UgpE) and a solute-binding protein (UgpB).

The protein resides in the cell inner membrane. The catalysed reaction is sn-glycerol 3-phosphate(out) + ATP + H2O = sn-glycerol 3-phosphate(in) + ADP + phosphate + H(+). In terms of biological role, part of the ABC transporter complex UgpBAEC involved in sn-glycerol-3-phosphate (G3P) import. Responsible for energy coupling to the transport system. The polypeptide is sn-glycerol-3-phosphate import ATP-binding protein UgpC 3 (Agrobacterium fabrum (strain C58 / ATCC 33970) (Agrobacterium tumefaciens (strain C58))).